Here is a 108-residue protein sequence, read N- to C-terminus: Mitochondrial import inner membrane translocase subunit tim-13 (108 aa).

A Twin CX3C motif motif is present at residues 45–68 (CTNKCITAPGSSLASGEKQCLQRC). 2 disulfides stabilise this stretch: Cys-45/Cys-68 and Cys-49/Cys-64. A disordered region spans residues 89–108 (EEMASSGGMGGGFGQGPSFS). Positions 95–108 (GGMGGGFGQGPSFS) are enriched in gly residues.

The protein belongs to the small Tim family. As to quaternary structure, heterohexamer; composed of 3 copies of tim-8/ddp-1 and 3 copies of tin-13/tim-13, named soluble 70 kDa complex. Associates with the TIM22 complex, whose core is composed of tim-22.

The protein resides in the mitochondrion inner membrane. In terms of biological role, mitochondrial intermembrane chaperone that participates in the import and insertion of some multi-pass transmembrane proteins into the mitochondrial inner membrane. Also required for the transfer of beta-barrel precursors from the TOM complex to the sorting and assembly machinery (SAM complex) of the outer membrane. Acts as a chaperone-like protein that protects the hydrophobic precursors from aggregation and guide them through the mitochondrial intermembrane space. The tim-8-tim-13 complex mediates the import of some proteins while the predominant tim-9/tin-9.1-tim-10/tin-10 70 kDa complex mediates the import of much more proteins. The sequence is that of Mitochondrial import inner membrane translocase subunit tim-13 (tin-13) from Caenorhabditis elegans.